Here is a 419-residue protein sequence, read N- to C-terminus: L-rhamnose isomerase (419 aa).

3 residues coordinate Mn(2+): histidine 262, aspartate 294, and aspartate 296.

This sequence belongs to the rhamnose isomerase family. In terms of assembly, homotetramer. Mn(2+) serves as cofactor.

It is found in the cytoplasm. It carries out the reaction L-rhamnopyranose = L-rhamnulose. It functions in the pathway carbohydrate degradation; L-rhamnose degradation; glycerone phosphate from L-rhamnose: step 1/3. Its function is as follows. Catalyzes the interconversion of L-rhamnose and L-rhamnulose. The polypeptide is L-rhamnose isomerase (Shigella flexneri serotype 5b (strain 8401)).